We begin with the raw amino-acid sequence, 204 residues long: Recombination protein RecR (204 aa).

A C4-type zinc finger spans residues 63–78 (CRRCFNITVGELCAIC). In terms of domain architecture, Toprim spans 86–181 (TKICVVEEPL…RVTRPARGLP (96 aa)).

It belongs to the RecR family.

In terms of biological role, may play a role in DNA repair. It seems to be involved in an RecBC-independent recombinational process of DNA repair. It may act with RecF and RecO. This Chloroflexus aurantiacus (strain ATCC 29366 / DSM 635 / J-10-fl) protein is Recombination protein RecR.